Here is a 363-residue protein sequence, read N- to C-terminus: NAD(P)H-quinone oxidoreductase subunit 1, chloroplastic (363 aa).

6 helical membrane passes run 27 to 47 (IWLFIPIFTPVSGITIGVLVI), 98 to 118 (FSIGPSVVVISILLSHLVIPF), 127 to 147 (LSIGVSLWIAISSIAPIGLLM), 248 to 268 (YSGIKFGLFYLASYLNLLVSS), 300 to 320 (VFGTTISIFFTLAKAYLFLFI), and 336 to 356 (LLNLGWKFLLPIALGNLLLTT).

Belongs to the complex I subunit 1 family. NDH is composed of at least 16 different subunits, 5 of which are encoded in the nucleus.

It is found in the plastid. It localises to the chloroplast thylakoid membrane. It carries out the reaction a plastoquinone + NADH + (n+1) H(+)(in) = a plastoquinol + NAD(+) + n H(+)(out). The catalysed reaction is a plastoquinone + NADPH + (n+1) H(+)(in) = a plastoquinol + NADP(+) + n H(+)(out). In terms of biological role, NDH shuttles electrons from NAD(P)H:plastoquinone, via FMN and iron-sulfur (Fe-S) centers, to quinones in the photosynthetic chain and possibly in a chloroplast respiratory chain. The immediate electron acceptor for the enzyme in this species is believed to be plastoquinone. Couples the redox reaction to proton translocation, and thus conserves the redox energy in a proton gradient. This Amborella trichopoda protein is NAD(P)H-quinone oxidoreductase subunit 1, chloroplastic.